The sequence spans 439 residues: Ectonucleotide pyrophosphatase/phosphodiesterase family member 7 (439 aa).

A signal peptide spans 1–21 (MGHSAVLLSVALVILPACVTG). The Extracellular segment spans residues 22 to 422 (GPVQRQQQHK…RSGSPLSRQH (401 aa)). Residues Asp38 and Thr74 each contribute to the Zn(2+) site. The interval 71–77 (VTMTSPC) is required for enzyme activity. Residue Thr74 is the Nucleophile of the active site. Asn95 contributes to the substrate binding site. 4 N-linked (GlcNAc...) asparagine glycosylation sites follow: Asn99, Asn120, Asn145, and Asn167. Zn(2+) contacts are provided by Asp198, His202, Asp245, and His246. N-linked (GlcNAc...) asparagine glycosylation is present at Asn266. His352 lines the Zn(2+) pocket. Residues 423–439 (HLVVVLMGILTGLAKVV) traverse the membrane as a helical segment.

It belongs to the nucleotide pyrophosphatase/phosphodiesterase family. It depends on Zn(2+) as a cofactor. In terms of processing, N-glycosylated; required for activity and transport to the plasma membrane. Detected in small intestine (at protein level). Highly expressed in the jejunum.

It is found in the cell membrane. The enzyme catalyses a sphingomyelin + H2O = phosphocholine + an N-acylsphing-4-enine + H(+). It catalyses the reaction a 1-O-alkyl-2-acetyl-sn-glycero-3-phosphocholine + H2O = a 1-O-alkyl-2-acetyl-sn-glycerol + phosphocholine + H(+). The catalysed reaction is 1-O-octadecyl-2-acetyl-sn-glycero-3-phosphocholine + H2O = 1-O-octadecyl-2-acetyl-sn-glycerol + phosphocholine + H(+). It carries out the reaction 1-hexadecanoyl-sn-glycero-3-phosphocholine + H2O = 1-hexadecanoyl-sn-glycerol + phosphocholine + H(+). Platelet-activating factor hydrolysis is inhibited by higher amount of sphingomyelin. The hydrolysis of platelet-activating factor and sphingomyelin can be inhibited by the presence of sphingomyelin and platelet-activating factor respectively, the inhibition of platelet-activating factor hydrolysis by sphingomyelin being stronger. PAF hydrolysis is dose-dependently increased by both taurocholate (TC) and taurodeoxycholate (TDC). Hydrolase activity against PAF is inhibited by EDTA and stimulated by 0.1-0.25 mM Zn2+. Its function is as follows. Choline-specific phosphodiesterase that hydrolyzes sphingomyelin (SM) releasing the ceramide and phosphocholine and therefore is involved in sphingomyelin digestion, ceramide formation, and fatty acid (FA) absorption in the gastrointestinal tract. Also has phospholipase C activity and can also cleave phosphocholine from palmitoyl lyso-phosphatidylcholine and platelet-activating factor (PAF) leading to its inactivation. Does not have nucleotide pyrophosphatase activity. May promote cholesterol absorption by affecting the levels of sphingomyelin derived from either diet or endogenous sources, in the intestinal lumen. The sequence is that of Ectonucleotide pyrophosphatase/phosphodiesterase family member 7 from Rattus norvegicus (Rat).